A 281-amino-acid chain; its full sequence is ATP phosphoribosyltransferase (281 aa).

Belongs to the ATP phosphoribosyltransferase family. Long subfamily. Requires Mg(2+) as cofactor.

The protein localises to the cytoplasm. The enzyme catalyses 1-(5-phospho-beta-D-ribosyl)-ATP + diphosphate = 5-phospho-alpha-D-ribose 1-diphosphate + ATP. The protein operates within amino-acid biosynthesis; L-histidine biosynthesis; L-histidine from 5-phospho-alpha-D-ribose 1-diphosphate: step 1/9. Its activity is regulated as follows. Feedback inhibited by histidine. Catalyzes the condensation of ATP and 5-phosphoribose 1-diphosphate to form N'-(5'-phosphoribosyl)-ATP (PR-ATP). Has a crucial role in the pathway because the rate of histidine biosynthesis seems to be controlled primarily by regulation of HisG enzymatic activity. The polypeptide is ATP phosphoribosyltransferase (Corynebacterium jeikeium (strain K411)).